Reading from the N-terminus, the 304-residue chain is N-acetyl-D-glucosamine kinase (304 aa).

ATP is bound by residues 4 to 11 (GFDMGGTK) and 133 to 140 (GVGGGLIV). 4 residues coordinate Zn(2+): histidine 157, cysteine 177, cysteine 179, and cysteine 184.

This sequence belongs to the ROK (NagC/XylR) family. NagK subfamily.

The catalysed reaction is N-acetyl-D-glucosamine + ATP = N-acetyl-D-glucosamine 6-phosphate + ADP + H(+). It participates in cell wall biogenesis; peptidoglycan recycling. Its function is as follows. Catalyzes the phosphorylation of N-acetyl-D-glucosamine (GlcNAc) derived from cell-wall degradation, yielding GlcNAc-6-P. This chain is N-acetyl-D-glucosamine kinase, found in Yersinia pseudotuberculosis serotype O:1b (strain IP 31758).